A 424-amino-acid chain; its full sequence is Elongation factor Tu, mitochondrial (424 aa).

In terms of domain architecture, tr-type G spans 36 to 234; the sequence is KPHVNVGTIG…VLDTKIPLPH (199 aa). Positions 45 to 52 are G1; sequence GHVDHGKT. GTP is bound at residue 45-52; the sequence is GHVDHGKT. The tract at residues 86-90 is G2; it reads GITIT. The segment at 107–110 is G3; it reads DCPG. Residues 107–111 and 162–165 each bind GTP; these read DCPGH and NKMD. Residues 162–165 are G4; the sequence is NKMD. The G5 stretch occupies residues 199–201; that stretch reads AAA.

It belongs to the TRAFAC class translation factor GTPase superfamily. Classic translation factor GTPase family. EF-Tu/EF-1A subfamily.

The protein localises to the mitochondrion. Its function is as follows. This protein promotes the GTP-dependent binding of aminoacyl-tRNA to the A-site of ribosomes during protein biosynthesis. The chain is Elongation factor Tu, mitochondrial (tufm) from Dictyostelium discoideum (Social amoeba).